Here is an 805-residue protein sequence, read N- to C-terminus: Rho GTPase-activating protein 42 (805 aa).

One can recognise a BAR domain in the interval 7–262 (EFSDSFLDSP…IRSAEQDFKA (256 aa)). Positions 225–262 (KQQLQFNLQNTRNNFESTRQEVENLMRRIRSAEQDFKA) form a coiled coil. The region spanning 265 to 374 (QWTMEGFLYV…WMEAMDGKEP (110 aa)) is the PH domain. Residues 376 to 572 (YTLPALLSKK…ILIENYDKIF (197 aa)) form the Rho-GAP domain. Disordered stretches follow at residues 576-600 (PDPNVPLPHPQSHSQSRGGARRSKA), 625-725 (SDTF…SELL), and 765-805 (VSRS…PGSV). Residues 626 to 654 (DTFSSSPSSTPMGSMESLSSHSSEQNSCS) are compositionally biased toward low complexity. Positions 670–693 (LCWTTPSPSTNGPKSPACTTSPDS) are enriched in polar residues. Positions 694–704 (SSKEDANKTDG) are enriched in basic and acidic residues. Residues 710–721 (LSTSPGDRSSPA) show a composition bias toward polar residues. The span at 782 to 793 (PPKDGMRFRDDS) shows a compositional bias: basic and acidic residues.

Functionally, may influence blood pressure by functioning as a GTPase-activating protein in vascular smooth muscle. The chain is Rho GTPase-activating protein 42 from Danio rerio (Zebrafish).